An 859-amino-acid chain; its full sequence is DNA mismatch repair protein MutS (859 aa).

614–621 (GPNMGGKS) contacts ATP.

The protein belongs to the DNA mismatch repair MutS family.

In terms of biological role, this protein is involved in the repair of mismatches in DNA. It is possible that it carries out the mismatch recognition step. This protein has a weak ATPase activity. In Histophilus somni (strain 2336) (Haemophilus somnus), this protein is DNA mismatch repair protein MutS.